Here is a 139-residue protein sequence, read N- to C-terminus: MRHYEIVFLVHPDQSEQVPGMIERYTGILTQAGGQVHRLEDWGRRQLAYPIIELHKAHYVLMNVEASAESVEELETAFRFNDAVLRSMVMRTKAAITEASPMAKAKDERDSRRSSEGERRSAPAEATEEVKETAEKAAE.

The interval 97–139 (TEASPMAKAKDERDSRRSSEGERRSAPAEATEEVKETAEKAAE) is disordered. Residues 104-139 (KAKDERDSRRSSEGERRSAPAEATEEVKETAEKAAE) show a composition bias toward basic and acidic residues.

The protein belongs to the bacterial ribosomal protein bS6 family.

In terms of biological role, binds together with bS18 to 16S ribosomal RNA. In Shewanella sediminis (strain HAW-EB3), this protein is Small ribosomal subunit protein bS6.